We begin with the raw amino-acid sequence, 663 residues long: Polyunsaturated fatty acid lipoxygenase ALOX15 (663 aa).

The region spanning 2–115 is the PLAT domain; the sequence is GLYRVRVSTG…ILSLPEGTAR (114 aa). The 548-residue stretch at 116–663 folds into the Lipoxygenase domain; sequence TVVDDPQGLF…PSRVENSVAI (548 aa). His361, His366, His541, His545, and Ile663 together coordinate Fe cation.

The protein belongs to the lipoxygenase family. In terms of assembly, interacts with PEBP1; in response to IL13/interleukin-13, prevents the interaction of PEBP1 with RAF1 to activate the ERK signaling cascade. Requires Fe cation as cofactor.

The protein resides in the cytoplasm. Its subcellular location is the cytosol. It localises to the cell membrane. The protein localises to the lipid droplet. The catalysed reaction is (5Z,8Z,11Z,14Z)-eicosatetraenoate + O2 = (12S)-hydroperoxy-(5Z,8Z,10E,14Z)-eicosatetraenoate. It catalyses the reaction (5Z,8Z,11Z,14Z)-eicosatetraenoate + O2 = (15S)-hydroperoxy-(5Z,8Z,11Z,13E)-eicosatetraenoate. The enzyme catalyses (9Z,12Z)-octadecadienoate + O2 = (13S)-hydroperoxy-(9Z,11E)-octadecadienoate. It carries out the reaction (5Z,8Z,11Z,14Z)-eicosatetraenoate + 2 O2 = (14R,15S)-dihydroperoxy-(5Z,8Z,10E,12E)-eicosatetraenoate. The catalysed reaction is (5Z,8Z,11Z,14Z)-eicosatetraenoate + 2 O2 = (8S,15S)-dihydroperoxy-(5Z,9E,11Z,13E)-eicosatetraenoate. It catalyses the reaction (14S,15R)-epoxy-(5Z,8Z,11Z)-eicosatrienoate + O2 = (8S)-hydroperoxy-(14S,15R)-epoxy-(5Z,9E,11Z)-eicosatrienoate. The enzyme catalyses (14S,15R)-epoxy-(5Z,8Z,11Z)-eicosatrienoate + O2 = (12S)-hydroperoxy-(14S,15R)-epoxy-(5Z,8Z,10E)-eicosatrienoate. It carries out the reaction (14R,15S)-epoxy-(5Z,8Z,11Z)-eicosatrienoate + O2 = (5S)-hydroperoxy-(14R,15S)-epoxy-(6E,8Z,11Z)-eicosatrienoate. The catalysed reaction is (14R,15S)-epoxy-(5Z,8Z,11Z)-eicosatrienoate + O2 = (12S)-hydroperoxy-(14R,15S)-epoxy-(5Z,8Z,10E)-eicosatrienoate. It catalyses the reaction (15R)-hydroperoxy-(5Z,8Z,11Z,13E)-eicosatetraenoate = 15-oxo-(5Z,8Z,11Z,13E)-eicosatetraenoate + H2O. The enzyme catalyses (15S)-hydroperoxy-(5Z,8Z,11Z,13E)-eicosatetraenoate = (14S,15S)-epoxy-(5Z,8Z,10E,12E)-eicosatetraenoate + H2O. It carries out the reaction (12S)-hydroperoxy-(5Z,8Z,10E,14Z)-eicosatetraenoate = (8S)-hydroxy-(11S,12S)-epoxy-(5Z,9E,14Z)-eicosatrienoate. The catalysed reaction is (4Z,7Z,10Z,13Z,16Z,19Z)-docosahexaenoate + O2 = 14-hydroperoxy-(4Z,7Z,10Z,12E,16Z,19Z)-docosahexaenoate. It catalyses the reaction (4Z,7Z,10Z,13Z,16Z)-docosapentaenoate + O2 = 14-hydroperoxy-(4Z,7Z,10Z,12E,16Z)-docosapentaenoate. The enzyme catalyses (7Z,10Z,13Z,16Z,19Z)-docosapentaenoate + O2 = 14-hydroperoxy-(7Z,10Z,12E,16Z,19Z)-docosapentaenoate. It carries out the reaction (4Z,7Z,10Z,13Z,16Z,19Z)-docosahexaenoate + O2 = (14S)-hydroperoxy-(4Z,7Z,10Z,12E,16Z,19Z)-docosahexaenoate. The catalysed reaction is (4Z,7Z,10Z,13Z,16Z,19Z)-docosahexaenoate + O2 = (17S)-hydroperoxy-(4Z,7Z,10Z,13Z,15E,19Z)-docosahexaenoate. It catalyses the reaction (7S)-hydroperoxy-(4Z,8E,10Z,13Z,16Z,19Z)-docosahexaenoate + O2 = (7S,14S)-dihydroperoxy-(4Z,8E,10Z,12E,16Z,19Z)-docosahexaenoate. The enzyme catalyses (7S)-hydroperoxy-(4Z,8E,10Z,13Z,16Z,19Z)-docosahexaenoate + O2 = (7S,17S)-dihydroperoxy-(4Z,8E,10Z,13Z,15E,19Z)-docosahexaenoate. It carries out the reaction (4Z,7Z,10Z,13Z,16Z,19Z)-docosahexaenoate + O2 = (11S)-hydroperoxy-(4Z,7Z,9E,13Z,16Z,19Z)-docosahexaenoate. The catalysed reaction is N-(5Z,8Z,11Z,14Z)-eicosatetraenoyl-taurine + O2 = N-(12S)-hydroperoxy-(5Z,8Z,10E,14Z)-eicosatetraenoyl-taurine. It catalyses the reaction N-(5Z,8Z,11Z,14Z)-eicosatetraenoyl-gamma-aminobutanoate + O2 = N-(12S)-hydroperoxy-(5Z,8Z,10E,14Z)-eicosatetraenoyl-gamma-aminobutanoate. The enzyme catalyses N-(5Z,8Z,11Z,14Z)-eicosatetraenoyl-glycine + O2 = N-(12S)-hydroperoxy-(5Z,8Z,10E,14Z)-eicosatetraenoyl-glycine. It carries out the reaction N-(5Z,8Z,11Z,14Z)-eicosatetraenoyl-L-alanine + O2 = N-(12S)-hydroperoxy-(5Z,8Z,10E,14Z)-eicosatetraenoyl-alanine. The catalysed reaction is N-(5Z,8Z,11Z,14Z)-eicosatetraenoyl-taurine + O2 = N-(15S)-hydroperoxy-(5Z,8Z,11Z,13E)-eicosatetraenoyl-taurine. It catalyses the reaction N-(5Z,8Z,11Z,14Z)-eicosatetraenoyl-gamma-aminobutanoate + O2 = N-(15S)-hydroperoxy-(5Z,8Z,11Z,13E)-eicosatetraenoyl-gamma-aminobutanoate. The enzyme catalyses N-(5Z,8Z,11Z,14Z)-eicosatetraenoyl-glycine + O2 = N-(15S)-hydroperoxy-(5Z,8Z,11Z,13E)-eicosatetraenoyl-glycine. It carries out the reaction N-(5Z,8Z,11Z,14Z)-eicosatetraenoyl-L-alanine + O2 = N-(15S)-hydroperoxy-(5Z,8Z,11Z,13E)-eicosatetraenoyl-alanine. Its pathway is lipid metabolism; hydroperoxy eicosatetraenoic acid biosynthesis. Functionally, non-heme iron-containing dioxygenase that catalyzes the stereo-specific peroxidation of free and esterified polyunsaturated fatty acids generating a spectrum of bioactive lipid mediators. It inserts peroxyl groups at C12 or C15 of arachidonate ((5Z,8Z,11Z,14Z)-eicosatetraenoate) producing both 12-hydroperoxyeicosatetraenoate/12-HPETE and 15-hydroperoxyeicosatetraenoate/15-HPETE. It may then act on 12-HPETE to produce hepoxilins, which may show pro-inflammatory properties. Can also peroxidize linoleate ((9Z,12Z)-octadecadienoate) to 13-hydroperoxyoctadecadienoate. May participate in the sequential oxidations of DHA ((4Z,7Z,10Z,13Z,16Z,19Z)-docosahexaenoate) to generate specialized pro-resolving mediators (SPMs)like resolvin D5 ((7S,17S)-diHPDHA) and (7S,14S)-diHPDHA, that actively down-regulate the immune response and have anti-aggregation properties with platelets. Can convert epoxy fatty acids to hydroperoxy-epoxides derivatives followed by an intramolecular nucleophilic substitution leading to the formation of monocyclic endoperoxides. Plays an important role during the maintenance of self-tolerance by peroxidizing membrane-bound phosphatidylethanolamine which can then signal the sorting process for clearance of apoptotic cells during inflammation and prevent an autoimmune response. In addition to its role in the immune and inflammatory responses, this enzyme may play a role in epithelial wound healing in the cornea through production of lipoxin A4 (LXA(4)) and docosahexaenoic acid-derived neuroprotectin D1 (NPD1; 10R,17S-HDHA), both lipid autacoids exhibit anti-inflammatory and neuroprotective properties. Furthermore, it may regulate actin polymerization which is crucial for several biological processes such as the phagocytosis of apoptotic cells. It is also implicated in the generation of endogenous ligands for peroxisome proliferator activated receptor (PPAR-gamma), hence modulating macrophage development and function. It may also exert a negative effect on skeletal development by regulating bone mass through this pathway. As well as participates in ER stress and downstream inflammation in adipocytes, pancreatic islets, and liver. Finally, it is also involved in the cellular response to IL13/interleukin-13. The polypeptide is Polyunsaturated fatty acid lipoxygenase ALOX15 (Sus scrofa (Pig)).